The sequence spans 215 residues: Cytidylate kinase (215 aa).

Residue 10–18 (GPAASGKGT) participates in ATP binding.

Belongs to the cytidylate kinase family. Type 1 subfamily.

The protein localises to the cytoplasm. It carries out the reaction CMP + ATP = CDP + ADP. The enzyme catalyses dCMP + ATP = dCDP + ADP. This Bartonella quintana (strain Toulouse) (Rochalimaea quintana) protein is Cytidylate kinase.